Reading from the N-terminus, the 261-residue chain is 4-hydroxy-tetrahydrodipicolinate reductase (261 aa).

Residues 11–16 (GFTGAM), 96–98 (GTT), and 122–125 (APNF) contribute to the NAD(+) site. H152 functions as the Proton donor/acceptor in the catalytic mechanism. Residue H153 coordinates (S)-2,3,4,5-tetrahydrodipicolinate. The active-site Proton donor is the K156. 162–163 (GT) contacts (S)-2,3,4,5-tetrahydrodipicolinate.

Belongs to the DapB family.

It localises to the cytoplasm. It carries out the reaction (S)-2,3,4,5-tetrahydrodipicolinate + NAD(+) + H2O = (2S,4S)-4-hydroxy-2,3,4,5-tetrahydrodipicolinate + NADH + H(+). It catalyses the reaction (S)-2,3,4,5-tetrahydrodipicolinate + NADP(+) + H2O = (2S,4S)-4-hydroxy-2,3,4,5-tetrahydrodipicolinate + NADPH + H(+). It participates in amino-acid biosynthesis; L-lysine biosynthesis via DAP pathway; (S)-tetrahydrodipicolinate from L-aspartate: step 4/4. Functionally, catalyzes the conversion of 4-hydroxy-tetrahydrodipicolinate (HTPA) to tetrahydrodipicolinate. The protein is 4-hydroxy-tetrahydrodipicolinate reductase of Lactobacillus acidophilus (strain ATCC 700396 / NCK56 / N2 / NCFM).